Here is a 177-residue protein sequence, read N- to C-terminus: Large ribosomal subunit protein uL6 (177 aa).

The protein belongs to the universal ribosomal protein uL6 family. In terms of assembly, part of the 50S ribosomal subunit.

Functionally, this protein binds to the 23S rRNA, and is important in its secondary structure. It is located near the subunit interface in the base of the L7/L12 stalk, and near the tRNA binding site of the peptidyltransferase center. This Hahella chejuensis (strain KCTC 2396) protein is Large ribosomal subunit protein uL6.